The chain runs to 279 residues: Acyl-coenzyme A thioesterase MBLAC2 (279 aa).

Ser2 carries the post-translational modification N-acetylserine. 7 residues coordinate Zn(2+): His83, His85, Asp87, His88, His170, Asp189, and His231. The S-palmitoyl cysteine moiety is linked to residue Cys254.

The protein belongs to the metallo-beta-lactamase superfamily. Glyoxalase II family. Zn(2+) is required as a cofactor. In terms of processing, palmitoylated on Cys-254 by ZDHHC20.

Its subcellular location is the endoplasmic reticulum membrane. It localises to the cell membrane. The catalysed reaction is hexadecanoyl-CoA + H2O = hexadecanoate + CoA + H(+). It catalyses the reaction dodecanoyl-CoA + H2O = dodecanoate + CoA + H(+). It carries out the reaction tetradecanoyl-CoA + H2O = tetradecanoate + CoA + H(+). The enzyme catalyses octadecanoyl-CoA + H2O = octadecanoate + CoA + H(+). The catalysed reaction is a beta-lactam + H2O = a substituted beta-amino acid. Beta-lactamase activity is inhibited by sulbactam. Functionally, acyl-CoA thioesterases are a group of enzymes that catalyze the hydrolysis of acyl-CoAs to the free fatty acid and coenzyme A (CoASH), providing the potential to regulate intracellular levels of acyl-CoAs, free fatty acids and CoASH. Has an acyl-CoA thioesterase activity towards the long chain fatty acyl-CoA thioester palmitoyl-CoA (hexadecanoyl-CoA; C16:0-CoA). Displays a substrate preference for fatty acyl-CoAs with chain-lengths C12-C18. Possesses beta-lactamase activity, catalyzing the hydrolysis of penicillin G and nitrocefin. Exhibits no activity towards other beta-lactam antibiotic classes including cephalosporins (cefotaxime) and carbapenems (imipenem). The polypeptide is Acyl-coenzyme A thioesterase MBLAC2 (MBLAC2) (Homo sapiens (Human)).